A 366-amino-acid polypeptide reads, in one-letter code: 2-aminoethylphosphonate--pyruvate transaminase (366 aa).

Residue lysine 192 is modified to N6-(pyridoxal phosphate)lysine.

This sequence belongs to the class-V pyridoxal-phosphate-dependent aminotransferase family. PhnW subfamily. As to quaternary structure, homodimer. Pyridoxal 5'-phosphate serves as cofactor.

It carries out the reaction (2-aminoethyl)phosphonate + pyruvate = phosphonoacetaldehyde + L-alanine. Involved in phosphonate degradation. This is 2-aminoethylphosphonate--pyruvate transaminase (phnW) from Lysinibacillus sphaericus (strain C3-41).